The sequence spans 831 residues: G-type lectin S-receptor-like serine/threonine-protein kinase At1g61390 (831 aa).

Residues Met-1–Ala-42 form the signal peptide. The Bulb-type lectin domain occupies Asp-43 to Phe-162. Residues Asp-43–Thr-448 are Extracellular-facing. Asn-45, Asn-71, Asn-106, and Asn-112 each carry an N-linked (GlcNAc...) asparagine glycan. Residues Pro-298 to Asp-334 enclose the EGF-like; atypical domain. Cystine bridges form between Cys-302–Cys-314 and Cys-308–Cys-322. Asn-340, Asn-356, Asn-399, and Asn-446 each carry an N-linked (GlcNAc...) asparagine glycan. The region spanning Cys-353 to Ser-439 is the PAN domain. 2 disulfide bridges follow: Cys-392/Cys-413 and Cys-396/Cys-402. A helical membrane pass occupies residues Lys-449 to Tyr-469. The Cytoplasmic segment spans residues Lys-470 to Arg-831. In terms of domain architecture, Protein kinase spans Phe-520–Phe-803. ATP-binding positions include Leu-526 to Val-534 and Lys-548. A phosphoserine mark is found at Ser-554 and Ser-569. The tract at residues Thr-609–Val-626 is caM-binding. Asp-645 functions as the Proton acceptor in the catalytic mechanism. Phosphoserine is present on residues Ser-649 and Ser-662. Thr-679 carries the post-translational modification Phosphothreonine. Residues Ser-722 and Ser-814 each carry the phosphoserine modification.

The protein belongs to the protein kinase superfamily. Ser/Thr protein kinase family.

The protein localises to the cell membrane. The catalysed reaction is L-seryl-[protein] + ATP = O-phospho-L-seryl-[protein] + ADP + H(+). It carries out the reaction L-threonyl-[protein] + ATP = O-phospho-L-threonyl-[protein] + ADP + H(+). The protein is G-type lectin S-receptor-like serine/threonine-protein kinase At1g61390 of Arabidopsis thaliana (Mouse-ear cress).